Consider the following 46-residue polypeptide: Photosystem II reaction center protein K (46 aa).

A propeptide spanning residues 1–9 (MESILMIFA) is cleaved from the precursor. A helical membrane pass occupies residues 25–45 (LPVIPVLFLLLAFVWQAAVSF).

This sequence belongs to the PsbK family. As to quaternary structure, PSII is composed of 1 copy each of membrane proteins PsbA, PsbB, PsbC, PsbD, PsbE, PsbF, PsbH, PsbI, PsbJ, PsbK, PsbL, PsbM, PsbT, PsbX, PsbY, PsbZ, Psb30/Ycf12, at least 3 peripheral proteins of the oxygen-evolving complex and a large number of cofactors. It forms dimeric complexes.

Its subcellular location is the plastid. It localises to the chloroplast thylakoid membrane. Its function is as follows. One of the components of the core complex of photosystem II (PSII). PSII is a light-driven water:plastoquinone oxidoreductase that uses light energy to abstract electrons from H(2)O, generating O(2) and a proton gradient subsequently used for ATP formation. It consists of a core antenna complex that captures photons, and an electron transfer chain that converts photonic excitation into a charge separation. The protein is Photosystem II reaction center protein K of Stigeoclonium helveticum (Green alga).